Reading from the N-terminus, the 83-residue chain is Disintegrin isoform D-3 (83 aa).

Positions 2–83 (PPVCGNELLE…GKSSDCPWNH (82 aa)) constitute a Disintegrin domain. 7 disulfide bridges follow: cysteine 5/cysteine 24, cysteine 16/cysteine 34, cysteine 18/cysteine 29, cysteine 28/cysteine 51, cysteine 42/cysteine 48, cysteine 47/cysteine 72, and cysteine 60/cysteine 79. A Cell attachment site motif is present at residues 64–66 (RGD).

It belongs to the venom metalloproteinase (M12B) family. P-II subfamily. P-IIa sub-subfamily. Monomer (disintegrin). Expressed by the venom gland.

It is found in the secreted. In terms of biological role, inhibits fibrinogen interaction with platelets. Acts by binding to alpha-IIb/beta-3 (ITGA2B/ITGB3) on the platelet surface and inhibits aggregation induced by ADP, thrombin, platelet-activating factor and collagen. This chain is Disintegrin isoform D-3, found in Bitis arietans (African puff adder).